A 371-amino-acid chain; its full sequence is tRNA-specific 2-thiouridylase MnmA (371 aa).

ATP-binding positions include 16 to 23 (GMSGGVDS) and methionine 42. Residues 102-104 (NPD) are interaction with target base in tRNA. Cysteine 107 serves as the catalytic Nucleophile. An intrachain disulfide couples cysteine 107 to cysteine 204. ATP is bound at residue glycine 132. The tract at residues 154–156 (KDQ) is interaction with tRNA. Cysteine 204 (cysteine persulfide intermediate) is an active-site residue. The interval 316-317 (RY) is interaction with tRNA.

It belongs to the MnmA/TRMU family.

Its subcellular location is the cytoplasm. The enzyme catalyses S-sulfanyl-L-cysteinyl-[protein] + uridine(34) in tRNA + AH2 + ATP = 2-thiouridine(34) in tRNA + L-cysteinyl-[protein] + A + AMP + diphosphate + H(+). Functionally, catalyzes the 2-thiolation of uridine at the wobble position (U34) of tRNA, leading to the formation of s(2)U34. This chain is tRNA-specific 2-thiouridylase MnmA, found in Shewanella halifaxensis (strain HAW-EB4).